Reading from the N-terminus, the 92-residue chain is Neurophysin 2 (92 aa).

7 disulfides stabilise this stretch: Cys-10-Cys-54, Cys-13-Cys-27, Cys-21-Cys-44, Cys-28-Cys-34, Cys-61-Cys-73, Cys-67-Cys-85, and Cys-74-Cys-79.

It belongs to the vasopressin/oxytocin family. There is an equilibrium between the monomeric and dimeric forms. On peptide binding the dimeric form predominates. Post-translationally, a shorter neurophysin molecule (1-90) also exists and is probably derived from the complete protein by proteolytic degradation (in vivo or after extraction).

It is found in the secreted. In terms of biological role, neurophysin 2 specifically binds vasopressin. The chain is Neurophysin 2 (AVP) from Loxodonta africana (African elephant).